We begin with the raw amino-acid sequence, 453 residues long: Mitochondrial import inner membrane translocase subunit TIM44 (453 aa).

At Thr129 the chain carries Phosphothreonine. ATP is bound at residue Gly167–Thr174. At Lys178 the chain carries N6-succinyllysine. Phosphoserine is present on Ser181. Lys218 carries the post-translational modification N6-succinyllysine.

It belongs to the Tim44 family. As to quaternary structure, probable component of the PAM complex at least composed of a mitochondrial HSP70 protein, GRPEL1 or GRPEL2, TIMM44, TIMM16/PAM16 and TIMM14/DNAJC19. The complex interacts with the TIMM23 component of the TIM23 complex. Interacts with SLC25A4/ANT1 and SLC25A5/ANT2; leading to inhibit the presequence translocase TIMM23, thereby promoting stabilization of PINK1.

The protein localises to the mitochondrion inner membrane. Its subcellular location is the mitochondrion matrix. In terms of biological role, essential component of the PAM complex, a complex required for the translocation of transit peptide-containing proteins from the inner membrane into the mitochondrial matrix in an ATP-dependent manner. Recruits mitochondrial HSP70 to drive protein translocation into the matrix using ATP as an energy source. This is Mitochondrial import inner membrane translocase subunit TIM44 (Timm44) from Rattus norvegicus (Rat).